An 84-amino-acid chain; its full sequence is M-myrmeciitoxin-Mb2a (84 aa).

Positions 1-21 are cleaved as a signal peptide; that stretch reads MKLSCLLLTLAIIFVLTIVHA. Residues 22–48 constitute a propeptide that is removed on maturation; the sequence is PNVKAKALADPESDAVGFADAVGEADP.

The protein belongs to the formicidae venom precursor-01 superfamily. Ant pilosulin family. In terms of tissue distribution, expressed by the venom gland.

It is found in the secreted. In terms of biological role, shows activity against E.coli and S.aureus (MIC&lt;6.25 uM), moderate activity against P.aeruginosa (MIC&lt;25 uM), weak activity against B.subtilis (MIC&lt;50 uM), and has no effect against L.garvieae, C.albicans, and S.cerevisiae. Has no hemolytic nor cytolytic activity. Causes an IgE-independent histamine release. The sequence is that of M-myrmeciitoxin-Mb2a from Myrmecia banksi (Jack jumper ant).